The following is a 95-amino-acid chain: Aspartyl/glutamyl-tRNA(Asn/Gln) amidotransferase subunit C (95 aa).

This sequence belongs to the GatC family. In terms of assembly, heterotrimer of A, B and C subunits.

The enzyme catalyses L-glutamyl-tRNA(Gln) + L-glutamine + ATP + H2O = L-glutaminyl-tRNA(Gln) + L-glutamate + ADP + phosphate + H(+). The catalysed reaction is L-aspartyl-tRNA(Asn) + L-glutamine + ATP + H2O = L-asparaginyl-tRNA(Asn) + L-glutamate + ADP + phosphate + 2 H(+). Functionally, allows the formation of correctly charged Asn-tRNA(Asn) or Gln-tRNA(Gln) through the transamidation of misacylated Asp-tRNA(Asn) or Glu-tRNA(Gln) in organisms which lack either or both of asparaginyl-tRNA or glutaminyl-tRNA synthetases. The reaction takes place in the presence of glutamine and ATP through an activated phospho-Asp-tRNA(Asn) or phospho-Glu-tRNA(Gln). The chain is Aspartyl/glutamyl-tRNA(Asn/Gln) amidotransferase subunit C from Trichlorobacter lovleyi (strain ATCC BAA-1151 / DSM 17278 / SZ) (Geobacter lovleyi).